Consider the following 353-residue polypeptide: UPF0283 membrane protein YpsIP31758_1791 (353 aa).

A run of 3 helical transmembrane segments spans residues 71-91, 101-121, and 214-234; these read MVTA…VQWV, IALG…GSVV, and ESAL…FIAW.

Belongs to the UPF0283 family.

It localises to the cell inner membrane. This Yersinia pseudotuberculosis serotype O:1b (strain IP 31758) protein is UPF0283 membrane protein YpsIP31758_1791.